We begin with the raw amino-acid sequence, 787 residues long: Phenylalanine--tRNA ligase beta subunit (787 aa).

A tRNA-binding domain is found at 38–151; the sequence is GQDPAPFVVA…SDYEVGDSFF (114 aa). Residues 397-474 form the B5 domain; that stretch reads SEGRVISFNP…RMHGYDKVQE (78 aa). Residues Asp452, Asp458, Glu461, and Glu462 each contribute to the Mg(2+) site. The 92-residue stretch at 694–785 folds into the FDX-ACB domain; sequence HKYQPVKRDF…VAQKLGGELR (92 aa).

This sequence belongs to the phenylalanyl-tRNA synthetase beta subunit family. Type 1 subfamily. Tetramer of two alpha and two beta subunits. Mg(2+) is required as a cofactor.

It is found in the cytoplasm. It catalyses the reaction tRNA(Phe) + L-phenylalanine + ATP = L-phenylalanyl-tRNA(Phe) + AMP + diphosphate + H(+). The protein is Phenylalanine--tRNA ligase beta subunit of Anaplasma marginale (strain St. Maries).